The chain runs to 412 residues: Isovaleryl-CoA dehydrogenase, mitochondrial (412 aa).

Residues 1–25 (MHKLFVARSVKSALFRIKNHQKPQF) constitute a mitochondrion transit peptide. FAD-binding positions include 154-163 (LAMSEPNAGS) and 187-189 (WCT). Ser163 provides a ligand contact to substrate. Substrate contacts are provided by residues 209–210 (SK), Tyr264, and 271–274 (DLER). Catalysis depends on Glu273, which acts as the Proton acceptor. FAD contacts are provided by residues Arg299, Gln310, and 367–371 (QCLGG). 394–395 (AG) serves as a coordination point for substrate. 396–398 (TSE) is an FAD binding site.

The protein belongs to the acyl-CoA dehydrogenase family. In terms of assembly, homotetramer. FAD is required as a cofactor. In terms of tissue distribution, expressed in flowers and tubers.

Its subcellular location is the mitochondrion. The catalysed reaction is 3-methylbutanoyl-CoA + oxidized [electron-transfer flavoprotein] + H(+) = 3-methylbut-2-enoyl-CoA + reduced [electron-transfer flavoprotein]. It participates in amino-acid degradation; L-leucine degradation; (S)-3-hydroxy-3-methylglutaryl-CoA from 3-isovaleryl-CoA: step 1/3. In terms of biological role, involved in the catabolism of amino acids. Uses isovaleryl-CoA as substrate. Minor activity detected with 2-methylpalmitoyl-CoA or 2-methylbutanoyl-CoA, but no activity with short- and medium-straight chain acyl-CoA esters or with 2-methylhexanoyl-CoA. In Solanum tuberosum (Potato), this protein is Isovaleryl-CoA dehydrogenase, mitochondrial (IVD).